We begin with the raw amino-acid sequence, 236 residues long: Orotidine 5'-phosphate decarboxylase (236 aa).

Residues aspartate 17, lysine 39, aspartate 66–threonine 75, threonine 125, arginine 186, glutamine 195, glycine 215, and arginine 216 each bind substrate. Lysine 68 (proton donor) is an active-site residue.

The protein belongs to the OMP decarboxylase family. Type 1 subfamily. In terms of assembly, homodimer.

It carries out the reaction orotidine 5'-phosphate + H(+) = UMP + CO2. It functions in the pathway pyrimidine metabolism; UMP biosynthesis via de novo pathway; UMP from orotate: step 2/2. Its function is as follows. Catalyzes the decarboxylation of orotidine 5'-monophosphate (OMP) to uridine 5'-monophosphate (UMP). This Buchnera aphidicola subsp. Acyrthosiphon pisum (strain APS) (Acyrthosiphon pisum symbiotic bacterium) protein is Orotidine 5'-phosphate decarboxylase.